Consider the following 108-residue polypeptide: Nitrite reductase (NADH) small subunit (108 aa).

As to quaternary structure, associates with NirB.

The protein resides in the cytoplasm. It catalyses the reaction NH4(+) + 3 NAD(+) + 2 H2O = nitrite + 3 NADH + 5 H(+). Its function is as follows. Required for activity of the reductase. The chain is Nitrite reductase (NADH) small subunit (nirD) from Salmonella typhi.